A 548-amino-acid chain; its full sequence is Glucose-6-phosphate isomerase (548 aa).

The Proton donor role is filled by glutamate 355. Catalysis depends on residues histidine 386 and lysine 514.

Belongs to the GPI family.

It is found in the cytoplasm. The catalysed reaction is alpha-D-glucose 6-phosphate = beta-D-fructose 6-phosphate. It participates in carbohydrate biosynthesis; gluconeogenesis. The protein operates within carbohydrate degradation; glycolysis; D-glyceraldehyde 3-phosphate and glycerone phosphate from D-glucose: step 2/4. Functionally, catalyzes the reversible isomerization of glucose-6-phosphate to fructose-6-phosphate. This Yersinia enterocolitica serotype O:8 / biotype 1B (strain NCTC 13174 / 8081) protein is Glucose-6-phosphate isomerase.